We begin with the raw amino-acid sequence, 962 residues long: Spliceosome associated factor 3, U4/U6 recycling protein (962 aa).

The segment covering 1-21 (MATTAASSASEPEVEPQAGPE) has biased composition (low complexity). Residues 1–92 (MATTAASSAS…EDEWEYDEEE (92 aa)) are disordered. Alanine 2 is modified (N-acetylalanine). Residues 2–352 (ATTAASSASE…LVPDLWIRYS (351 aa)) are mediates interaction with PRPF3. A Phosphoserine modification is found at serine 10. The segment covering 81–92 (AGEDEWEYDEEE) has biased composition (acidic residues). HAT repeat units follow at residues 127–159 (GELS…DEIS), 165–196 (LDRE…YSVG), 202–238 (GGLE…FESA), 243–276 (ARLE…WSEE), 325–357 (GDPA…YLDR), 360–392 (KVKD…AMER), 395–431 (LDHQ…YLRR), 441–474 (KELE…PSCL), and 488–521 (NNMQ…LERA). A Phosphoserine modification is found at serine 216. Residues 488 to 521 (NNMQKARELWDSIMTRGNAKYANMWLEYYNLERA) are required for interaction with USP4. Positions 538-952 (CTSDYPEHVC…VATEAPKMSN (415 aa)) are necessary and sufficient for U6 snRNA binding. Residues 559–618 (TLEDWDLAIQKTETRLARVNEQRMKAAEKEAALVQQEEEKAEQRKKVRAEKKALKKKKKT) are a coiled coil. The segment covering 591–602 (LVQQEEEKAEQR) has biased composition (basic and acidic residues). The disordered stretch occupies residues 591 to 696 (LVQQEEEKAE…SLKRDMPKVA (106 aa)). Residues 601–670 (QRKKVRAEKK…KEETELSGKC (70 aa)) form a required for nuclear localization region. Residues 602–609 (RKKVRAEK) carry the Nuclear localization signal motif. A compositionally biased stretch (basic residues) spans 603-618 (KKVRAEKKALKKKKKT). Residues 627-640 (DEDEENEWGEEEEE) show a composition bias toward acidic residues. Phosphoserine is present on serine 651. Positions 680-696 (KQKEKAASLKRDMPKVA) are enriched in basic and acidic residues. Residues 704–782 (VTVFVSNLPY…RPMFVSPCVD (79 aa)) form the RRM 1 domain. 2 positions are modified to phosphoserine: serine 795 and serine 852. The RRM 2 domain maps to 801-878 (HKLFISGLPF…NVIKVAISNP (78 aa)). The tract at residues 880-962 (QRKVPEKPEV…ADFAKLLLRK (83 aa)) is disordered. At arginine 906 the chain carries Omega-N-methylarginine.

As to quaternary structure, component of the 7SK snRNP complex at least composed of P-TEFb (composed of CDK9 and CCNT1/cyclin-T1), HEXIM1, HEXIM2, BCDIN3, SART3 proteins and 7SK and U6 snRNAs. Interacts with AGO1 and AGO2. Interacts with PRPF3 and USP4; the interaction with PRPF3 is direct and recruits USP4 to its substrate PRPF3. Interacts with USP15; the interaction is direct. As to expression, ubiquitously expressed, with low level of expression in liver, heart and skeletal. Also detected in hematopoietic cells (at protein level).

The protein resides in the nucleus. The protein localises to the nucleoplasm. Its subcellular location is the cajal body. It is found in the nucleus speckle. It localises to the cytoplasm. Functionally, U6 snRNP-binding protein that functions as a recycling factor of the splicing machinery. Promotes the initial reassembly of U4 and U6 snRNPs following their ejection from the spliceosome during its maturation. Also binds U6atac snRNPs and may function as a recycling factor for U4atac/U6atac spliceosomal snRNP, an initial step in the assembly of U12-type spliceosomal complex. The U12-type spliceosomal complex plays a role in the splicing of introns with non-canonical splice sites. May also function as a substrate-targeting factor for deubiquitinases like USP4 and USP15. Recruits USP4 to ubiquitinated PRPF3 within the U4/U5/U6 tri-snRNP complex, promoting PRPF3 deubiquitination and thereby regulating the spliceosome U4/U5/U6 tri-snRNP spliceosomal complex disassembly. May also recruit the deubiquitinase USP15 to histone H2B and mediate histone deubiquitination, thereby regulating gene expression and/or DNA repair. May play a role in hematopoiesis probably through transcription regulation of specific genes including MYC. The sequence is that of Spliceosome associated factor 3, U4/U6 recycling protein from Mus musculus (Mouse).